Here is a 297-residue protein sequence, read N- to C-terminus: 4-hydroxy-tetrahydrodipicolinate synthase (297 aa).

Residue Thr-55 participates in pyruvate binding. Catalysis depends on Tyr-144, which acts as the Proton donor/acceptor. Catalysis depends on Lys-172, which acts as the Schiff-base intermediate with substrate. Ile-213 contacts pyruvate.

The protein belongs to the DapA family. As to quaternary structure, homotetramer; dimer of dimers.

The protein localises to the cytoplasm. The catalysed reaction is L-aspartate 4-semialdehyde + pyruvate = (2S,4S)-4-hydroxy-2,3,4,5-tetrahydrodipicolinate + H2O + H(+). The protein operates within amino-acid biosynthesis; L-lysine biosynthesis via DAP pathway; (S)-tetrahydrodipicolinate from L-aspartate: step 3/4. Functionally, catalyzes the condensation of (S)-aspartate-beta-semialdehyde [(S)-ASA] and pyruvate to 4-hydroxy-tetrahydrodipicolinate (HTPA). This is 4-hydroxy-tetrahydrodipicolinate synthase from Lactococcus lactis subsp. cremoris (strain SK11).